We begin with the raw amino-acid sequence, 340 residues long: Ferrochelatase (340 aa).

Residues His-202 and Glu-283 each coordinate Fe cation.

It belongs to the ferrochelatase family.

The protein localises to the cytoplasm. It catalyses the reaction heme b + 2 H(+) = protoporphyrin IX + Fe(2+). Its pathway is porphyrin-containing compound metabolism; protoheme biosynthesis; protoheme from protoporphyrin-IX: step 1/1. Catalyzes the ferrous insertion into protoporphyrin IX. The sequence is that of Ferrochelatase from Acinetobacter baylyi (strain ATCC 33305 / BD413 / ADP1).